Consider the following 1009-residue polypeptide: DENN domain-containing protein 2A (1009 aa).

Disordered stretches follow at residues 15–153 (AEAS…LRFQ), 171–334 (KDGS…HRKS), 434–479 (KLLD…KKRK), and 498–532 (KRVK…LKAH). Basic and acidic residues-rich tracts occupy residues 45–59 (NIKD…KKEV), 130–147 (QPER…EPRL), 218–247 (HPSD…DRSL), and 275–284 (HAGEGDKDGK). Positions 297–314 (PPLPSLPPPPLPSSPPPS) are enriched in pro residues. Over residues 434 to 443 (KLLDTRKLSR) the composition is skewed to basic and acidic residues. Polar residues predominate over residues 503–513 (LSQSMESNSGK). S551 carries the phosphoserine modification. The uDENN domain maps to 566–715 (EYFVVVSLHK…PFPALGKTIL (150 aa)). Positions 737 to 870 (RLEHVDFESL…LQVALEHILE (134 aa)) constitute a cDENN domain. A dDENN domain is found at 872-969 (RNELACEQDE…QERELRRQDA (98 aa)).

It is found in the cytoplasm. Its subcellular location is the cytoskeleton. Its function is as follows. Guanine nucleotide exchange factor (GEF) which may activate RAB9A and RAB9B. Promotes the exchange of GDP to GTP, converting inactive GDP-bound Rab proteins into their active GTP-bound form. May play a role in late endosomes back to trans-Golgi network/TGN transport. In Homo sapiens (Human), this protein is DENN domain-containing protein 2A (DENND2A).